The sequence spans 161 residues: Regulator of ribonuclease activity A (161 aa).

It belongs to the RraA family. Homotrimer. Binds to both RNA-binding sites in the C-terminal region of Rne and to RhlB.

The protein localises to the cytoplasm. In terms of biological role, globally modulates RNA abundance by binding to RNase E (Rne) and regulating its endonucleolytic activity. Can modulate Rne action in a substrate-dependent manner by altering the composition of the degradosome. Modulates RNA-binding and helicase activities of the degradosome. The chain is Regulator of ribonuclease activity A from Shewanella sediminis (strain HAW-EB3).